Consider the following 1187-residue polypeptide: MATESTTNTTTIIARADQHDIDLHKASDRVNFGSIKEPIDVPYLLGVQTDSFDWLIGNERWKARVEEDEKNGTNTVAHTSGLDEVFNEISPIENFAQTMSLTFSDPYFEEPRHTVQECKEKDYTYSAPLYVNAEFENGDTGEIKSQTVFMGDFPLQTPHGTFIIGGTERVIVSQLVRSPGVYFDRQQDRTSDKEVFGAKIIPSRGAWLEFEIDKKDQPQVRVDRKRKQSAIVFLMAIGMTKSEIAQAFKDYPLVLDALEKETLGTQDEALVDLYRKIRPADTPTPEAGKNLLDSFYFNTKRYDLARVGRYKINRKLGVEADFNDRSLHQEDIIATIKYLVALHDGAATFPGKRNGEDVDLRVDVDDIDHFGNRRIRQVGELIQNQLRTGLSRMERVVRERMTTQDAEAITPQSLINIRPVNATIKEFFGTSQLSQFMDQNNPLSGVTNKRRLSALGPGGLSRDRASMEVRDVHPSHFGRMCPIESPEGPNIGLIGSLATFGRVNPFGFIETPYRKVVNGHVTDEVEYMTADRDLDHVIAQANQELDENGNFVQKSALARVGEEEAVDVPVSSVDYMDVSPRQMVSLGASLIPFLEHDEGHRALMGTNMQRQAVPLIESERPLVGTGSEWRAANDSGDVIKSEKDGVVTYVSADLIRVMNDDGTTSSYKLAKFQRSNQTTCYNQRPIVHDGERVEAGSVMADGPAIQNGDLALGKNLLIAFMPWNGYNYEDAVIISQRLVQDDTLSSIHIEEYEIDARETKLGAEEITRDLPNVGEDAVANLDERGIIRIGAEVEAGDILVGKVTPKGETELTPEERLLRAIFGEKSREVRDTSLRVPHGETGTVIGVKEITREDAEEDGDELPNGVNQMIRVYIAQHRKITVGDKLSGRHGNKGCISRILPEEDMPFLADGTPVDIMLNPLGVPSRMNLGQVLELHLGWIAHSGWDISLDPNLEAEWKKLIPSGAEKAEPNTPVATPVFDGVKPEVLKGLLSTTLPNRDGDRLVGPDGKATLFDGRTGEPYTKPISVGYMYMLKLHHLVDDKIHARSTGPYSMITQQPLGGKAQFGGQRFGEMEVWALEAYGAAYTLHEMMTTKSDDVDGRVRVYGAIVKGDNLPPAGIPESFKVLLKEMQSLSLNVEVLNAEGVAIDMKDEDDDPASSADDLGFNIGARPDAAAKEDQKAEEPEYQ.

Residues 1150–1187 are disordered; sequence KDEDDDPASSADDLGFNIGARPDAAAKEDQKAEEPEYQ. Positions 1173–1187 are enriched in basic and acidic residues; sequence AAAKEDQKAEEPEYQ.

This sequence belongs to the RNA polymerase beta chain family. In terms of assembly, the RNAP catalytic core consists of 2 alpha, 1 beta, 1 beta' and 1 omega subunit. When a sigma factor is associated with the core the holoenzyme is formed, which can initiate transcription.

It catalyses the reaction RNA(n) + a ribonucleoside 5'-triphosphate = RNA(n+1) + diphosphate. Functionally, DNA-dependent RNA polymerase catalyzes the transcription of DNA into RNA using the four ribonucleoside triphosphates as substrates. This Bifidobacterium longum (strain DJO10A) protein is DNA-directed RNA polymerase subunit beta.